The sequence spans 541 residues: Glucose-6-phosphate isomerase (541 aa).

Catalysis depends on Glu347, which acts as the Proton donor. Residues His378 and Lys506 contribute to the active site.

This sequence belongs to the GPI family.

It is found in the cytoplasm. It carries out the reaction alpha-D-glucose 6-phosphate = beta-D-fructose 6-phosphate. It participates in carbohydrate biosynthesis; gluconeogenesis. It functions in the pathway carbohydrate degradation; glycolysis; D-glyceraldehyde 3-phosphate and glycerone phosphate from D-glucose: step 2/4. Catalyzes the reversible isomerization of glucose-6-phosphate to fructose-6-phosphate. The sequence is that of Glucose-6-phosphate isomerase from Francisella tularensis subsp. holarctica (strain OSU18).